Here is a 254-residue protein sequence, read N- to C-terminus: Attacin-A (254 aa).

Positions 1 to 18 (MFTYKLILGLVLVVSASA) are cleaved as a signal peptide. The propeptide occupies 19-62 (RYLVFEDLEGESYLVPNQAEDEQVLEGEPFYENAVQLASPRVRR).

It belongs to the attacin/sarcotoxin-2 family.

The protein resides in the secreted. Its function is as follows. Hemolymph antibacterial protein. The protein is Attacin-A of Trichoplusia ni (Cabbage looper).